We begin with the raw amino-acid sequence, 356 residues long: Phospho-N-acetylmuramoyl-pentapeptide-transferase (356 aa).

The next 10 helical transmembrane spans lie at 25–45, 70–90, 93–113, 138–158, 164–184, 195–215, 232–252, 258–278, 284–304, and 333–353; these read TVAAMLTSGLIVFLFGPSIIS, GTPTMGGLMILSGVVISALLW, LFNIYLWVSLFVMLFFGAIGF, FLVASIASFIILQVGSPGLAL, YFINLGWFFIPFSACVVVGLG, GLAIVPVMVASLSFALIAYLS, VGELAVLLGAVFGAGLGFLWF, AIFMGDTGSLALGGLLGIVSV, IVLIFIGGLFVLETLSVIIQV, and QIVVRFWIIAIVLALIGLSTL.

It belongs to the glycosyltransferase 4 family. MraY subfamily. Mg(2+) serves as cofactor.

It is found in the cell inner membrane. The enzyme catalyses UDP-N-acetyl-alpha-D-muramoyl-L-alanyl-gamma-D-glutamyl-meso-2,6-diaminopimeloyl-D-alanyl-D-alanine + di-trans,octa-cis-undecaprenyl phosphate = di-trans,octa-cis-undecaprenyl diphospho-N-acetyl-alpha-D-muramoyl-L-alanyl-D-glutamyl-meso-2,6-diaminopimeloyl-D-alanyl-D-alanine + UMP. It participates in cell wall biogenesis; peptidoglycan biosynthesis. Functionally, catalyzes the initial step of the lipid cycle reactions in the biosynthesis of the cell wall peptidoglycan: transfers peptidoglycan precursor phospho-MurNAc-pentapeptide from UDP-MurNAc-pentapeptide onto the lipid carrier undecaprenyl phosphate, yielding undecaprenyl-pyrophosphoryl-MurNAc-pentapeptide, known as lipid I. The sequence is that of Phospho-N-acetylmuramoyl-pentapeptide-transferase from Bartonella bacilliformis (strain ATCC 35685 / KC583 / Herrer 020/F12,63).